We begin with the raw amino-acid sequence, 64 residues long: DNA gyrase inhibitor YacG (64 aa).

Positions 7, 10, 26, and 30 each coordinate Zn(2+). A disordered region spans residues 44 to 64 (RIPGEIDPELLPYPEEGEQWQ).

Belongs to the DNA gyrase inhibitor YacG family. Interacts with GyrB. Zn(2+) is required as a cofactor.

Inhibits all the catalytic activities of DNA gyrase by preventing its interaction with DNA. Acts by binding directly to the C-terminal domain of GyrB, which probably disrupts DNA binding by the gyrase. In Aeromonas hydrophila subsp. hydrophila (strain ATCC 7966 / DSM 30187 / BCRC 13018 / CCUG 14551 / JCM 1027 / KCTC 2358 / NCIMB 9240 / NCTC 8049), this protein is DNA gyrase inhibitor YacG.